The chain runs to 153 residues: uncharacterized protein (153 aa).

The segment at 1-88 (MDKDRPGLPA…VPPPQLDHPG (88 aa)) is disordered.

This is an uncharacterized protein from Epstein-Barr virus (strain P3HR-1) (HHV-4).